Here is a 354-residue protein sequence, read N- to C-terminus: Protein RecA (354 aa).

Residue Gly65–Thr72 participates in ATP binding.

This sequence belongs to the RecA family.

It localises to the cytoplasm. Can catalyze the hydrolysis of ATP in the presence of single-stranded DNA, the ATP-dependent uptake of single-stranded DNA by duplex DNA, and the ATP-dependent hybridization of homologous single-stranded DNAs. It interacts with LexA causing its activation and leading to its autocatalytic cleavage. In Pseudomonas syringae pv. syringae (strain B728a), this protein is Protein RecA.